The primary structure comprises 664 residues: Ent-copalyl diphosphate synthase 5 (664 aa).

Position 101 (K101) interacts with substrate. Mg(2+)-binding residues include D233 and D235. Residues 233–236 (DIDD) carry the DXDD motif motif. K320 contributes to the substrate binding site.

It belongs to the terpene synthase family. Tpsc subfamily. Mg(2+) is required as a cofactor. Ubiquitous expression in roots, stems, leaves and flowers.

The protein resides in the plastid. It localises to the chloroplast. It catalyses the reaction (2E,6E,10E)-geranylgeranyl diphosphate = ent-copalyl diphosphate. The protein operates within secondary metabolite biosynthesis; terpenoid biosynthesis. Functionally, involved in the biosynthesis of ent-kaurene diterpenoids natural products such as oridonin, miltiradiene, eriocalyxin B and nezukol, known to exhibit antitumor, anti-inflammatory and antibacterial activities. Catalyzes the conversion of (2E,6E,10E)-geranylgeranyl diphosphate (GGPP) to ent-copalyl diphosphate (ent-CPP). This chain is Ent-copalyl diphosphate synthase 5, found in Isodon rubescens (Rabdosia rubescens).